Consider the following 406-residue polypeptide: Aspartokinase (406 aa).

One can recognise an ACT domain in the interval 342–406; the sequence is IIGHGIKNDL…LLKISETGHC (65 aa).

This sequence belongs to the aspartokinase family.

It catalyses the reaction L-aspartate + ATP = 4-phospho-L-aspartate + ADP. It participates in amino-acid biosynthesis; L-lysine biosynthesis via DAP pathway; (S)-tetrahydrodipicolinate from L-aspartate: step 1/4. Its pathway is amino-acid biosynthesis; L-methionine biosynthesis via de novo pathway; L-homoserine from L-aspartate: step 1/3. The protein operates within amino-acid biosynthesis; L-threonine biosynthesis; L-threonine from L-aspartate: step 1/5. This is Aspartokinase (lysC) from Rickettsia bellii (strain RML369-C).